Reading from the N-terminus, the 713-residue chain is Calpain-1 catalytic subunit (713 aa).

One can recognise a Calpain catalytic domain in the interval 55-354 (LFQDEAFPPV…FTKLEICNLT (300 aa)). The Ca(2+) site is built by glutamine 109 and aspartate 114. Residues cysteine 115, histidine 272, and asparagine 296 contribute to the active site. Aspartate 318 and glutamate 323 together coordinate Ca(2+). Position 354 is a phosphothreonine (threonine 354). Residues 355–525 (PDALKSRTLR…KKAGTQELDD (171 aa)) are domain III. Residues 526 to 541 (QIQANLPDEKVLSEEE) form a linker region. 4 EF-hand domains span residues 540 to 575 (EEID…IISK), 584 to 617 (FSLE…NRIR), 614 to 649 (NRIR…AGFK), and 679 to 713 (VRLE…TMFA). Residues 542 to 712 (IDDNFKTLFS…LFKWLQLTMF (171 aa)) are domain IV. Positions 597, 599, 601, 603, 608, 627, 629, 631, 633, and 638 each coordinate Ca(2+).

The protein belongs to the peptidase C2 family. As to quaternary structure, forms a heterodimer with a small (regulatory) subunit CAPNS1. It depends on Ca(2+) as a cofactor. In terms of processing, undergoes calcium-induced successive autoproteolytic cleavages that generate a membrane-bound 78 kDa active form and an intracellular 75 kDa active form. Calpastatin reduces with high efficiency the transition from 78 kDa to 75 kDa calpain forms.

The protein resides in the cytoplasm. It localises to the cell membrane. It carries out the reaction Broad endopeptidase specificity.. Activated by micromolar concentrations of calcium and inhibited by calpastatin. Functionally, calcium-regulated non-lysosomal thiol-protease which catalyzes limited proteolysis of substrates involved in cytoskeletal remodeling and signal transduction. Proteolytically cleaves CTBP1 at 'Asn-375', 'Gly-388' and 'His-410'. Cleaves and activates caspase-7 (CASP7). The polypeptide is Calpain-1 catalytic subunit (Mus musculus (Mouse)).